The following is a 118-amino-acid chain: Large ribosomal subunit protein bL20 (118 aa).

The protein belongs to the bacterial ribosomal protein bL20 family.

Its function is as follows. Binds directly to 23S ribosomal RNA and is necessary for the in vitro assembly process of the 50S ribosomal subunit. It is not involved in the protein synthesizing functions of that subunit. The sequence is that of Large ribosomal subunit protein bL20 (rplT) from Thermotoga maritima (strain ATCC 43589 / DSM 3109 / JCM 10099 / NBRC 100826 / MSB8).